The sequence spans 86 residues: MQDELFETEKAPQKNAKNAKNAPKKSFEEHVHSLERVIDRLNDPNLSLKDGMDLYKTAMQELFLAQKLLENAYSEYEKLQTPNKKA.

The disordered stretch occupies residues 1–26 (MQDELFETEKAPQKNAKNAKNAPKKS).

The protein belongs to the XseB family. Heterooligomer composed of large and small subunits.

It localises to the cytoplasm. It catalyses the reaction Exonucleolytic cleavage in either 5'- to 3'- or 3'- to 5'-direction to yield nucleoside 5'-phosphates.. Its function is as follows. Bidirectionally degrades single-stranded DNA into large acid-insoluble oligonucleotides, which are then degraded further into small acid-soluble oligonucleotides. The protein is Exodeoxyribonuclease 7 small subunit of Helicobacter pylori (strain J99 / ATCC 700824) (Campylobacter pylori J99).